Consider the following 369-residue polypeptide: Phospho-N-acetylmuramoyl-pentapeptide-transferase (369 aa).

The next 10 helical transmembrane spans lie at 2-22 (IPLL…TQLF), 55-75 (AVVI…SWWI), 82-102 (PSVS…VGFL), 120-140 (AKLI…INFA), 163-183 (LAFA…NLII), 196-216 (LDGL…LIGI), 240-260 (PLDL…FLWW), 267-287 (IFMG…FAIL), 292-312 (ILLA…ILQV), and 349-369 (ILGG…WVVF).

Belongs to the glycosyltransferase 4 family. MraY subfamily. The cofactor is Mg(2+).

The protein localises to the cell membrane. The enzyme catalyses UDP-N-acetyl-alpha-D-muramoyl-L-alanyl-gamma-D-glutamyl-meso-2,6-diaminopimeloyl-D-alanyl-D-alanine + di-trans,octa-cis-undecaprenyl phosphate = di-trans,octa-cis-undecaprenyl diphospho-N-acetyl-alpha-D-muramoyl-L-alanyl-D-glutamyl-meso-2,6-diaminopimeloyl-D-alanyl-D-alanine + UMP. Its pathway is cell wall biogenesis; peptidoglycan biosynthesis. Catalyzes the initial step of the lipid cycle reactions in the biosynthesis of the cell wall peptidoglycan: transfers peptidoglycan precursor phospho-MurNAc-pentapeptide from UDP-MurNAc-pentapeptide onto the lipid carrier undecaprenyl phosphate, yielding undecaprenyl-pyrophosphoryl-MurNAc-pentapeptide, known as lipid I. This is Phospho-N-acetylmuramoyl-pentapeptide-transferase from Renibacterium salmoninarum (strain ATCC 33209 / DSM 20767 / JCM 11484 / NBRC 15589 / NCIMB 2235).